A 232-amino-acid polypeptide reads, in one-letter code: Platelet-activating factor acetylhydrolase IB subunit alpha1 (232 aa).

The segment at 1-20 is disordered; sequence MSGEGENPASKPTPVQDVQG. Ser2 is subject to N-acetylserine. Residue Ser2 is modified to Phosphoserine. Active-site residues include Ser48, Asp193, and His196.

This sequence belongs to the 'GDSL' lipolytic enzyme family. Platelet-activating factor acetylhydrolase IB beta/gamma subunits subfamily. As to quaternary structure, forms a catalytic dimer which is either homodimer (alpha1/alpha1 homodimer) or heterodimer with PAFAH1B2 (alpha1/alpha2 heterodimer). Component of the cytosolic (PAF-AH (I)) heterotetrameric enzyme, which is composed of PAFAH1B1 (beta), PAFAH1B2 (alpha2) and PAFAH1B3 (alpha1) subunits. The catalytic activity of the enzyme resides in the alpha1 (PAFAH1B3) and alpha2 (PAFAH1B2) subunits, whereas the beta subunit (PAFAH1B1) has regulatory activity. Trimer formation is not essential for the catalytic activity. Interacts with VLDLR; this interaction may modulate the Reelin pathway. As to expression, expressed in brain, spleen, lung, liver, kidney and testis. Not expressed in heart and skeletal muscle. Expressed in fetal brain as heterodimer. Not expressed in adult tissues. Expressed exclusively in granule cells.

The protein resides in the cytoplasm. The enzyme catalyses a 1-O-alkyl-2-acetyl-sn-glycero-3-phosphocholine + H2O = a 1-O-alkyl-sn-glycero-3-phosphocholine + acetate + H(+). The catalysed reaction is 1-O-hexadecyl-2-acetyl-sn-glycero-3-phosphocholine + H2O = 1-O-hexadecyl-sn-glycero-3-phosphocholine + acetate + H(+). It catalyses the reaction 1-O-hexadecyl-2-acetyl-sn-glycero-3-phosphate + H2O = 1-O-hexadecyl-sn-glycero-3-phosphate + acetate + H(+). With respect to regulation, beta subunit (PAFAH1B1) inhibits the acetylhydrolase activity of the alpha1/alpha1 catalytic homodimer. Functionally, alpha1 catalytic subunit of the cytosolic type I platelet-activating factor (PAF) acetylhydrolase (PAF-AH (I)) heterotetrameric enzyme that catalyzes the hydrolyze of the acetyl group at the sn-2 position of PAF and its analogs and modulates the action of PAF. The activity and substrate specificity of PAF-AH (I) are affected by its subunit composition. Both alpha1/alpha1 homodimer (PAFAH1B3/PAFAH1B3 homodimer) and alpha1/alpha2 heterodimer(PAFAH1B3/PAFAH1B2 heterodimer) hydrolyze 1-O-alkyl-2-acetyl-sn-glycero-3-phosphoric acid (AAGPA) more efficiently than PAF, but they have little hydrolytic activity towards 1-O-alkyl-2-acetyl-sn-glycero-3-phosphorylethanolamine (AAGPE). Plays an important role during the development of brain. The protein is Platelet-activating factor acetylhydrolase IB subunit alpha1 of Rattus norvegicus (Rat).